A 186-amino-acid polypeptide reads, in one-letter code: Adenine phosphoribosyltransferase (186 aa).

AMP is bound at residue 132–136; it reads ATGGS.

Belongs to the purine/pyrimidine phosphoribosyltransferase family. In terms of assembly, homodimer. Mg(2+) serves as cofactor.

It is found in the cytoplasm. The protein localises to the nucleus. It catalyses the reaction AMP + diphosphate = 5-phospho-alpha-D-ribose 1-diphosphate + adenine. The protein operates within purine metabolism; AMP biosynthesis via salvage pathway; AMP from adenine: step 1/1. Functionally, catalyzes a salvage reaction resulting in the formation of AMP, that is energically less costly than de novo synthesis. The sequence is that of Adenine phosphoribosyltransferase (APT1) from Debaryomyces hansenii (strain ATCC 36239 / CBS 767 / BCRC 21394 / JCM 1990 / NBRC 0083 / IGC 2968) (Yeast).